The chain runs to 249 residues: Phosphonates import ATP-binding protein PhnC (249 aa).

An ABC transporter domain is found at 2-246 (IEFKKVEKVW…KLNESKLEEI (245 aa)). 35–42 (GLSGAGKT) lines the ATP pocket.

Belongs to the ABC transporter superfamily. Phosphonates importer (TC 3.A.1.9.1) family. As to quaternary structure, the complex is composed of two ATP-binding proteins (PhnC), two transmembrane proteins (PhnE) and a solute-binding protein (PhnD).

The protein localises to the cell membrane. The catalysed reaction is phosphonate(out) + ATP + H2O = phosphonate(in) + ADP + phosphate + H(+). Functionally, part of the ABC transporter complex PhnCDE involved in phosphonates import. Responsible for energy coupling to the transport system. This chain is Phosphonates import ATP-binding protein PhnC, found in Mesoplasma florum (strain ATCC 33453 / NBRC 100688 / NCTC 11704 / L1) (Acholeplasma florum).